The primary structure comprises 251 residues: Ubiquinone/menaquinone biosynthesis C-methyltransferase UbiE (251 aa).

S-adenosyl-L-methionine is bound by residues Thr74, Asp95, 123–124 (NA), and Ser140.

This sequence belongs to the class I-like SAM-binding methyltransferase superfamily. MenG/UbiE family.

The enzyme catalyses a 2-demethylmenaquinol + S-adenosyl-L-methionine = a menaquinol + S-adenosyl-L-homocysteine + H(+). The catalysed reaction is a 2-methoxy-6-(all-trans-polyprenyl)benzene-1,4-diol + S-adenosyl-L-methionine = a 5-methoxy-2-methyl-3-(all-trans-polyprenyl)benzene-1,4-diol + S-adenosyl-L-homocysteine + H(+). It participates in quinol/quinone metabolism; menaquinone biosynthesis; menaquinol from 1,4-dihydroxy-2-naphthoate: step 2/2. Its pathway is cofactor biosynthesis; ubiquinone biosynthesis. Its function is as follows. Methyltransferase required for the conversion of demethylmenaquinol (DMKH2) to menaquinol (MKH2) and the conversion of 2-polyprenyl-6-methoxy-1,4-benzoquinol (DDMQH2) to 2-polyprenyl-3-methyl-6-methoxy-1,4-benzoquinol (DMQH2). This is Ubiquinone/menaquinone biosynthesis C-methyltransferase UbiE from Cronobacter sakazakii (strain ATCC BAA-894) (Enterobacter sakazakii).